Consider the following 364-residue polypeptide: Probable 7-methylxanthine methyltransferase 5 (364 aa).

Tyr19 is an S-adenosyl-L-homocysteine binding site. Thr26 lines the theobromine pocket. Residues Cys64, Gln69, Asp101, Leu102, Ser134, and Phe135 each coordinate S-adenosyl-L-homocysteine. Theobromine is bound by residues Tyr152, His155, and Trp156. Positions 172, 258, 260, and 261 each coordinate Mg(2+). Phe314 is a theobromine binding site.

It belongs to the methyltransferase superfamily. Type-7 methyltransferase family. The cofactor is Mg(2+).

It carries out the reaction 7-methylxanthine + S-adenosyl-L-methionine = theobromine + S-adenosyl-L-homocysteine + H(+). Its pathway is alkaloid biosynthesis. Involved in the biosynthesis of theobromine. In Theobroma cacao (Cacao), this protein is Probable 7-methylxanthine methyltransferase 5.